A 626-amino-acid polypeptide reads, in one-letter code: Extracellular metalloproteinase 1 (626 aa).

The first 17 residues, 1-17 (MLSSLLAGAGLVALAAS), serve as a signal peptide directing secretion. Positions 18-241 (HPTSHGNALT…IHGVVDYSAD (224 aa)) are excised as a propeptide. Asn-315 carries an N-linked (GlcNAc...) asparagine glycan. His-425 serves as a coordination point for Zn(2+). Residue Glu-426 is part of the active site. His-429 contacts Zn(2+). The interval 606–626 (GSGARYSSTARTGSTALPSGC) is disordered. The span at 610–626 (RYSSTARTGSTALPSGC) shows a compositional bias: polar residues.

Belongs to the peptidase M36 family. Requires Zn(2+) as cofactor.

It localises to the secreted. Functionally, secreted metalloproteinase that allows assimilation of proteinaceous substrates. The protein is Extracellular metalloproteinase 1 (MEP1) of Phaeosphaeria nodorum (strain SN15 / ATCC MYA-4574 / FGSC 10173) (Glume blotch fungus).